We begin with the raw amino-acid sequence, 454 residues long: tRNA modification GTPase MnmE (454 aa).

3 residues coordinate (6S)-5-formyl-5,6,7,8-tetrahydrofolate: Arg-23, Glu-80, and Lys-120. The TrmE-type G domain maps to 216 to 377 (GMKVVIAGRP…LRNHLKQSMG (162 aa)). Asn-226 lines the K(+) pocket. GTP-binding positions include 226 to 231 (NAGKSS), 245 to 251 (TDIAGTT), 270 to 273 (DTAG), 335 to 338 (NKAD), and 358 to 360 (SAR). Residue Ser-230 coordinates Mg(2+). Positions 245, 247, and 250 each coordinate K(+). Thr-251 contributes to the Mg(2+) binding site. Lys-454 provides a ligand contact to (6S)-5-formyl-5,6,7,8-tetrahydrofolate.

Belongs to the TRAFAC class TrmE-Era-EngA-EngB-Septin-like GTPase superfamily. TrmE GTPase family. As to quaternary structure, homodimer. Heterotetramer of two MnmE and two MnmG subunits. K(+) serves as cofactor.

Its subcellular location is the cytoplasm. In terms of biological role, exhibits a very high intrinsic GTPase hydrolysis rate. Involved in the addition of a carboxymethylaminomethyl (cmnm) group at the wobble position (U34) of certain tRNAs, forming tRNA-cmnm(5)s(2)U34. The protein is tRNA modification GTPase MnmE of Klebsiella pneumoniae (strain 342).